The sequence spans 343 residues: Dihydroorotase (343 aa).

H13 and H15 together coordinate Zn(2+). Substrate contacts are provided by residues 15 to 17 (HFR) and N41. Zn(2+)-binding residues include K98, H135, and H173. The residue at position 98 (K98) is an N6-carboxylysine. H135 contributes to the substrate binding site. A substrate-binding site is contributed by L218. Position 246 (D246) interacts with Zn(2+). Residue D246 is part of the active site. Residues H250 and A262 each contribute to the substrate site.

This sequence belongs to the metallo-dependent hydrolases superfamily. DHOase family. Class II DHOase subfamily. Homodimer. Requires Zn(2+) as cofactor.

The catalysed reaction is (S)-dihydroorotate + H2O = N-carbamoyl-L-aspartate + H(+). The protein operates within pyrimidine metabolism; UMP biosynthesis via de novo pathway; (S)-dihydroorotate from bicarbonate: step 3/3. Its function is as follows. Catalyzes the reversible cyclization of carbamoyl aspartate to dihydroorotate. The sequence is that of Dihydroorotase from Marinomonas sp. (strain MWYL1).